The chain runs to 208 residues: Ribosome maturation factor RimP (208 aa).

Residues 165–208 (TAQPKKGQRQGKEPAKESGQKKQLAEAAPRSGSKRSERGSEKRK) are disordered. Basic and acidic residues-rich tracts occupy residues 174-188 (QGKE…KKQL) and 198-208 (KRSERGSEKRK).

The protein belongs to the RimP family.

It localises to the cytoplasm. Its function is as follows. Required for maturation of 30S ribosomal subunits. The protein is Ribosome maturation factor RimP of Sorangium cellulosum (strain So ce56) (Polyangium cellulosum (strain So ce56)).